The chain runs to 128 residues: uncharacterized protein (128 aa).

Residues 6–74 (GSKLQGKITG…KDGKIGLSIK (69 aa)) form the S1 motif domain. Residues 72–128 (SIKKAKDRPQARPRNDFRPKESFEQKMNKFLKDSEDRLSSLKRNTESKRGGRGARRG) form a disordered region. Residues 78–120 (DRPQARPRNDFRPKESFEQKMNKFLKDSEDRLSSLKRNTESKR) show a composition bias toward basic and acidic residues.

Belongs to the peptidase U57 family.

This is an uncharacterized protein from Bacillus subtilis (strain 168).